We begin with the raw amino-acid sequence, 285 residues long: Probable endonuclease 4 (285 aa).

The Zn(2+) site is built by histidine 69, histidine 109, glutamate 145, aspartate 179, histidine 182, histidine 216, aspartate 229, histidine 231, and glutamate 261.

It belongs to the AP endonuclease 2 family. The cofactor is Zn(2+).

It catalyses the reaction Endonucleolytic cleavage to 5'-phosphooligonucleotide end-products.. Functionally, endonuclease IV plays a role in DNA repair. It cleaves phosphodiester bonds at apurinic or apyrimidinic (AP) sites, generating a 3'-hydroxyl group and a 5'-terminal sugar phosphate. This is Probable endonuclease 4 from Shigella dysenteriae serotype 1 (strain Sd197).